A 538-amino-acid polypeptide reads, in one-letter code: Chaperonin GroEL 2 (538 aa).

Residues 29 to 32 (TLGP), 86 to 90 (DGTTT), glycine 412, 479 to 481 (NAA), and aspartate 495 contribute to the ATP site.

The protein belongs to the chaperonin (HSP60) family. Forms a cylinder of 14 subunits composed of two heptameric rings stacked back-to-back. Interacts with the co-chaperonin GroES.

It is found in the cytoplasm. The enzyme catalyses ATP + H2O + a folded polypeptide = ADP + phosphate + an unfolded polypeptide.. In terms of biological role, together with its co-chaperonin GroES, plays an essential role in assisting protein folding. The GroEL-GroES system forms a nano-cage that allows encapsulation of the non-native substrate proteins and provides a physical environment optimized to promote and accelerate protein folding. This chain is Chaperonin GroEL 2, found in Renibacterium salmoninarum (strain ATCC 33209 / DSM 20767 / JCM 11484 / NBRC 15589 / NCIMB 2235).